The primary structure comprises 303 residues: UDP-3-O-acyl-N-acetylglucosamine deacetylase (303 aa).

Zn(2+)-binding residues include histidine 78, histidine 237, and aspartate 241. Catalysis depends on histidine 264, which acts as the Proton donor.

It belongs to the LpxC family. Zn(2+) serves as cofactor.

It carries out the reaction a UDP-3-O-[(3R)-3-hydroxyacyl]-N-acetyl-alpha-D-glucosamine + H2O = a UDP-3-O-[(3R)-3-hydroxyacyl]-alpha-D-glucosamine + acetate. It functions in the pathway glycolipid biosynthesis; lipid IV(A) biosynthesis; lipid IV(A) from (3R)-3-hydroxytetradecanoyl-[acyl-carrier-protein] and UDP-N-acetyl-alpha-D-glucosamine: step 2/6. In terms of biological role, catalyzes the hydrolysis of UDP-3-O-myristoyl-N-acetylglucosamine to form UDP-3-O-myristoylglucosamine and acetate, the committed step in lipid A biosynthesis. This Pseudomonas savastanoi pv. phaseolicola (strain 1448A / Race 6) (Pseudomonas syringae pv. phaseolicola (strain 1448A / Race 6)) protein is UDP-3-O-acyl-N-acetylglucosamine deacetylase.